Reading from the N-terminus, the 92-residue chain is Small ribosomal subunit protein uS19c (92 aa).

It belongs to the universal ribosomal protein uS19 family.

It localises to the plastid. It is found in the chloroplast. Its function is as follows. Protein S19 forms a complex with S13 that binds strongly to the 16S ribosomal RNA. This is Small ribosomal subunit protein uS19c from Nasturtium officinale (Watercress).